Consider the following 636-residue polypeptide: Transcription termination factor FttA (636 aa).

The tract at residues 3 to 70 (SEMLEEIKRT…IIIRSDRSVL (68 aa)) is KHa. The interval 71-138 (MDPEKAIRKI…WAPKILRTPP (68 aa)) is KHb. Positions 179 to 383 (WARLTAMGGF…LVMESTYGGH (205 aa)) are metallo-beta-lactamase N-terminus. Residues His242, His244, Asp246, His247, His329, and Asp352 each coordinate Zn(2+). Residues 384–577 (EDVQPSRNRA…MNIKTIEGFS (194 aa)) are beta-Casp. Positions 578–636 (GHSDRRQLMEYVKRISPKPEKILLCHGDNYKTLDLASSIYRTYRIETKTPLNLETVRIQ) are metallo-beta-lactamase C-terminus. His603 is a Zn(2+) binding site.

This sequence belongs to the metallo-beta-lactamase superfamily. RNA-metabolizing metallo-beta-lactamase-like family. FttA subfamily. As to quaternary structure, homodimer. Interacts with RNA polymerase (RNAP), interacts with the Spt4-Spt5 complex. Does not seem to interact with the RNA degrading exosome. Zn(2+) is required as a cofactor.

Its activity is regulated as follows. Most active at 0.5 M or 0.7 M NaCl, less active at 1.0 M NaCl. Nuclease activity is inhibited by N,N,Tetrakis-(2-pyridylmethyl)-ethylene diamine (TPEN), a specific chelator of zinc ions. Functionally, terminates transcription on the whole genome. Termination is linked to FttA-mediated RNA cleavage and does not require NTP hydrolysis. Cleaves endonucleolytically at the RNA exit channel of RNA polymerase (RNAP); the 5'-3' exonuclease activity of this protein degrades the nascent RNA released from RNAP. In terms of biological role, an RNA nuclease, it bind single-stranded RNA (ssRNA) with a preference for U-rich sequences. The protein is Transcription termination factor FttA of Methanothermobacter thermautotrophicus (strain ATCC 29096 / DSM 1053 / JCM 10044 / NBRC 100330 / Delta H) (Methanobacterium thermoautotrophicum).